The following is a 350-amino-acid chain: Methionine import ATP-binding protein MetN (350 aa).

Residues 2-241 (IQIKNLKKEY…PQAPVTRSFV (240 aa)) enclose the ABC transporter domain. 38–45 (GHSGAGKS) contacts ATP.

This sequence belongs to the ABC transporter superfamily. Methionine importer (TC 3.A.1.24) family. In terms of assembly, the complex is composed of two ATP-binding proteins (MetN), two transmembrane proteins (MetI) and a solute-binding protein (MetQ).

Its subcellular location is the cell inner membrane. It catalyses the reaction L-methionine(out) + ATP + H2O = L-methionine(in) + ADP + phosphate + H(+). The enzyme catalyses D-methionine(out) + ATP + H2O = D-methionine(in) + ADP + phosphate + H(+). Its function is as follows. Part of the ABC transporter complex MetNIQ involved in methionine import. Responsible for energy coupling to the transport system. The chain is Methionine import ATP-binding protein MetN from Francisella tularensis subsp. holarctica (strain LVS).